The primary structure comprises 416 residues: Prostacyclin receptor (416 aa).

At 1–45 (MVASGGRPDGPPSITPESPLIVGGREWQGMAGSCWNITYVQDSVG) the chain is on the extracellular side. 2 cysteine pairs are disulfide-bonded: Cys-34/Cys-194 and Cys-121/Cys-199. Asn-36 is a glycosylation site (N-linked (GlcNAc...) asparagine). Residues 46–67 (PATSTLMFVAGVVGNGLALGIL) traverse the membrane as a helical segment. The Cytoplasmic portion of the chain corresponds to 68-80 (GARRRSHPSAFAV). A helical membrane pass occupies residues 81–105 (LVTGLAVTDLLGTCFLSPAVFVAYA). At 106-123 (RNSSLLGLAHGGTMLCDT) the chain is on the extracellular side. Residues 124 to 144 (FAFAMTFFGLASTLILFAMAV) traverse the membrane as a helical segment. Over 145-163 (ERCLALSHPYLYAQLDGPR) the chain is Cytoplasmic. A helical membrane pass occupies residues 164-187 (CARLALPAIYAFCCLFCSLPLLGL). The Extracellular portion of the chain corresponds to 188 to 215 (GEHQQYCPGSWCFIRMRSPQPGGCAFSL). Residues 216–237 (AYASLMALLVTSIFFCNGSVTL) traverse the membrane as a helical segment. Residues 238–264 (SLCHMYRQQRRHHGSFVPTSRAREDEV) lie on the Cytoplasmic side of the membrane. A helical transmembrane segment spans residues 265 to 289 (YHLILLALMTGIMAVCSLPLTIRGF). The Extracellular segment spans residues 290-302 (TQAIAPDSREMGD). Residues 303–323 (LHAFRFNAFNPILDPWVFILF) traverse the membrane as a helical segment. Residues 324 to 416 (RKAVFQRLKF…TEAVVACSLC (93 aa)) are Cytoplasmic-facing. Ser-366 bears the Phosphoserine mark. The residue at position 413 (Cys-413) is a Cysteine methyl ester. Residue Cys-413 is the site of S-farnesyl cysteine attachment. Positions 414 to 416 (SLC) are cleaved as a propeptide — removed in mature form.

The protein belongs to the G-protein coupled receptor 1 family. As to quaternary structure, interacts (non-isoprenylated C-terminus) with PDZK1. Post-translationally, isoprenylation does not influence ligand binding but is required for efficient coupling to the effectors adenylyl cyclase and phospholipase C.

The protein resides in the cell membrane. Receptor for prostacyclin (prostaglandin I2 or PGI2). The activity of this receptor is mediated by G(s) proteins which activate adenylate cyclase. This Rattus norvegicus (Rat) protein is Prostacyclin receptor (Ptgir).